We begin with the raw amino-acid sequence, 426 residues long: MLDSKLLRTQLQDVADRLASRGFTLDVARIESLEAQRKVVQTRTEQLQAERNARSKSIGQAKQRGEDIAPLMADVERMGNELSEGKVELDGIQAELDALVLSIPNLPHESVPVGADEEGNVEVRRWGTPTSFDFEVKDHVALGEKFGWLDFETAAKLSGARFALLRGPIARLHRALAQFMINLHINEHGYEETYTPYLVQAPALQGTGQLPKFEEDLFKISREGEADLYLIPTAEVSLTNIVSGEILDAKQLPLKFVAHTPCFRSEAGASGRDTRGMIRQHQFDKVEMVQIVAPDDSMAALESLTGNAERVLQLLELPYRTLALCTGDMGFSAVKTYDLEVWIPSQDKYREISSCSNCGDFQARRMQARWRNPETGKPELVHTLNGSGLAVGRTLVAVLENYQQADGSIRVPEVLKPYMGGLEVIG.

233-235 (TAE) contributes to the L-serine binding site. ATP is bound at residue 264–266 (RSE). E287 serves as a coordination point for L-serine. 351 to 354 (EISS) lines the ATP pocket. S387 lines the L-serine pocket.

Belongs to the class-II aminoacyl-tRNA synthetase family. Type-1 seryl-tRNA synthetase subfamily. As to quaternary structure, homodimer. The tRNA molecule binds across the dimer.

Its subcellular location is the cytoplasm. The enzyme catalyses tRNA(Ser) + L-serine + ATP = L-seryl-tRNA(Ser) + AMP + diphosphate + H(+). The catalysed reaction is tRNA(Sec) + L-serine + ATP = L-seryl-tRNA(Sec) + AMP + diphosphate + H(+). Its pathway is aminoacyl-tRNA biosynthesis; selenocysteinyl-tRNA(Sec) biosynthesis; L-seryl-tRNA(Sec) from L-serine and tRNA(Sec): step 1/1. In terms of biological role, catalyzes the attachment of serine to tRNA(Ser). Is also able to aminoacylate tRNA(Sec) with serine, to form the misacylated tRNA L-seryl-tRNA(Sec), which will be further converted into selenocysteinyl-tRNA(Sec). This chain is Serine--tRNA ligase, found in Pseudomonas syringae pv. syringae (strain B728a).